Reading from the N-terminus, the 200-residue chain is Small ribosomal subunit protein uS4 (200 aa).

A disordered region spans residues 22–42 (TGKELEKRPYAPGPHGPGQRK). One can recognise an S4 RNA-binding domain in the interval 92-155 (TRLDNLVYRL…QNLAVVKESV (64 aa)).

Belongs to the universal ribosomal protein uS4 family. In terms of assembly, part of the 30S ribosomal subunit. Contacts protein S5. The interaction surface between S4 and S5 is involved in control of translational fidelity.

In terms of biological role, one of the primary rRNA binding proteins, it binds directly to 16S rRNA where it nucleates assembly of the body of the 30S subunit. With S5 and S12 plays an important role in translational accuracy. This Bacillus pumilus (strain SAFR-032) protein is Small ribosomal subunit protein uS4.